Here is a 623-residue protein sequence, read N- to C-terminus: Scarecrow-like protein 22 (623 aa).

Disordered stretches follow at residues 62–90 (RSPS…AAAA) and 179–203 (PNPG…QPGS). Residues 63-80 (SPSPFVSSSTTTLSSSHG) show a composition bias toward low complexity. A GRAS domain is found at 235 to 622 (NDQDQSAVII…KELVTVSAWK (388 aa)). A leucine repeat I (LRI) region spans residues 242–311 (VIIDQLFSAA…ALHSLLQDSS (70 aa)). Residues 330 to 398 (YRAFSETSPF…SSAPSLKITA (69 aa)) form a VHIID region. The short motif at 361 to 365 (IHIVD) is the VHIID element. Residues 413-448 (FTEENLRSFAGETGVSFEIELLNMEILLNPTYWPLS) form a leucine repeat II (LRII) region. The PFYRE stretch occupies residues 458–545 (IAVNLPISSM…RFCVQPSIQK (88 aa)). Positions 548 to 622 (TNRYRWMERS…KELVTVSAWK (75 aa)) are SAW.

It belongs to the GRAS family. As to expression, expressed in seedlings, roots, leaves and flowers.

The protein resides in the nucleus. Its function is as follows. Probable transcription factor involved in plant development. The polypeptide is Scarecrow-like protein 22 (SCL22) (Arabidopsis thaliana (Mouse-ear cress)).